We begin with the raw amino-acid sequence, 598 residues long: Arginine--tRNA ligase (598 aa).

The 'HIGH' region motif lies at 131–141 (ANPTGPMHVGH). The interval 288-309 (KLPPPKSKKGQPPPQPQPDEEG) is disordered.

This sequence belongs to the class-I aminoacyl-tRNA synthetase family. In terms of assembly, monomer.

It localises to the cytoplasm. The enzyme catalyses tRNA(Arg) + L-arginine + ATP = L-arginyl-tRNA(Arg) + AMP + diphosphate. The polypeptide is Arginine--tRNA ligase (Anaeromyxobacter dehalogenans (strain 2CP-1 / ATCC BAA-258)).